Consider the following 628-residue polypeptide: Chaperone protein HtpG (628 aa).

Residues 1–333 (MTTDTKATET…SADLPLNVSR (333 aa)) are a; substrate-binding. Positions 334 to 549 (EMIQESPLLA…EHGPDRQFER (216 aa)) are b. The segment at 550-628 (LMNAAGRLDK…RLIARGIAKG (79 aa)) is c.

The protein belongs to the heat shock protein 90 family. Homodimer.

It localises to the cytoplasm. Molecular chaperone. Has ATPase activity. In Mesorhizobium japonicum (strain LMG 29417 / CECT 9101 / MAFF 303099) (Mesorhizobium loti (strain MAFF 303099)), this protein is Chaperone protein HtpG.